The chain runs to 134 residues: Sec-independent protein translocase protein TatB (134 aa).

The chain crosses the membrane as a helical span at residues phenylalanine 2–glycine 22. The interval alanine 90–lysine 134 is disordered. Residues serine 123 to lysine 134 show a composition bias toward polar residues.

Belongs to the TatB family. The Tat system comprises two distinct complexes: a TatABC complex, containing multiple copies of TatA, TatB and TatC subunits, and a separate TatA complex, containing only TatA subunits. Substrates initially bind to the TatABC complex, which probably triggers association of the separate TatA complex to form the active translocon.

It localises to the cell inner membrane. Functionally, part of the twin-arginine translocation (Tat) system that transports large folded proteins containing a characteristic twin-arginine motif in their signal peptide across membranes. Together with TatC, TatB is part of a receptor directly interacting with Tat signal peptides. TatB may form an oligomeric binding site that transiently accommodates folded Tat precursor proteins before their translocation. The polypeptide is Sec-independent protein translocase protein TatB (Shewanella frigidimarina (strain NCIMB 400)).